Reading from the N-terminus, the 172-residue chain is MAKMQSKMQSEKPDDGMREKMIAVNRVTKVVKGGRIMGFAALAVVGDGDGRIGMGKGKSKEVPVAVQKAMEEARRKMIKVTLKNGTLQHTVTGKHGASSVLMLPAKEGTGVIAGGPMRAIFEVMGVTNVVAKSTGSTNPYNMVRATLEGLAKMNTPSEIAAKRGKSVEEILG.

Residues 17 to 80 enclose the S5 DRBM domain; sequence MREKMIAVNR…EEARRKMIKV (64 aa).

It belongs to the universal ribosomal protein uS5 family. As to quaternary structure, part of the 30S ribosomal subunit. Contacts proteins S4 and S8.

In terms of biological role, with S4 and S12 plays an important role in translational accuracy. Its function is as follows. Located at the back of the 30S subunit body where it stabilizes the conformation of the head with respect to the body. This Herminiimonas arsenicoxydans protein is Small ribosomal subunit protein uS5.